A 44-amino-acid chain; its full sequence is Omega-plectoxin-Pt1a (44 aa).

Cystine bridges form between Cys3–Cys17, Cys10–Cys23, Cys16–Cys35, Cys20–Cys42, and Cys25–Cys33. Thr44 carries the post-translational modification Threonine amide. The O-palmitoyl threonine moiety is linked to residue Thr44.

This sequence belongs to the neurotoxin 02 (plectoxin) family. 02 (plectoxin) subfamily. Post-translationally, contains 5 disulfide bonds. Acylation by palmitate is required for biological activity. As to expression, expressed by the venom gland.

It is found in the secreted. Its function is as follows. Toxin that inhibits presynaptic voltage-gated calcium channel (Cav) in Drosophila nerve terminals, most likely through specific block of the Cav2 channel (known as Dmca1A). The chain is Omega-plectoxin-Pt1a from Plectreurys tristis (Spider).